We begin with the raw amino-acid sequence, 92 residues long: Non-specific lipid-transfer protein 1 (92 aa).

4 disulfide bridges follow: Cys-4/Cys-52, Cys-14/Cys-28, Cys-29/Cys-74, and Cys-50/Cys-88.

This sequence belongs to the plant LTP family. In terms of tissue distribution, expressed in seeds and, at very low levels, in pulp of fruit (at protein level).

Its function is as follows. Plant non-specific lipid-transfer proteins transfer phospholipids as well as galactolipids across membranes. May play a role in wax or cutin deposition in the cell walls of expanding epidermal cells and certain secretory tissues. The sequence is that of Non-specific lipid-transfer protein 1 from Actinidia deliciosa (Kiwi).